The chain runs to 214 residues: Adenylate kinase (214 aa).

Residue 10 to 15 (GAGKGT) coordinates ATP. The interval 30 to 59 (CTGDMLRAAVKAGSELGLKAKEIMDAGKLV) is NMP. AMP-binding positions include T31, R36, 57 to 59 (KLV), 85 to 88 (GFPR), and Q92. The interval 122–159 (GRRVHAASGRVYHIKFNPPKVEDKDDVTGEELTIRKDD) is LID. ATP contacts are provided by residues R123 and 132 to 133 (VY). AMP-binding residues include R156 and R167. Residue R200 coordinates ATP.

The protein belongs to the adenylate kinase family. As to quaternary structure, monomer.

The protein localises to the cytoplasm. It catalyses the reaction AMP + ATP = 2 ADP. It functions in the pathway purine metabolism; AMP biosynthesis via salvage pathway; AMP from ADP: step 1/1. Functionally, catalyzes the reversible transfer of the terminal phosphate group between ATP and AMP. Plays an important role in cellular energy homeostasis and in adenine nucleotide metabolism. In Yersinia enterocolitica, this protein is Adenylate kinase.